A 400-amino-acid polypeptide reads, in one-letter code: Selection and upkeep of intraepithelial T-cells protein 2 (400 aa).

Positions 1 to 21 (MGATGVLLCVVLHFLQMVTQS) are cleaved as a signal peptide. Topologically, residues 22-240 (SEKFTVTGLQ…LSGELFSWKR (219 aa)) are extracellular. Residues 23 to 133 (EKFTVTGLQR…VGEFYEEHIT (111 aa)) enclose the Ig-like V-type domain. 2 disulfide bridges follow: C46/C120 and C160/C214. Residues 139–225 (ATSSVMYILM…LQNLLTHQEE (87 aa)) enclose the Ig-like C1-type domain. A glycan (N-linked (GlcNAc...) asparagine) is linked at N197. Residues 241-261 (VWIMILTTIGFMMIAFCMTYC) form a helical membrane-spanning segment. Topologically, residues 262 to 280 (VQQHLLYGTFSKGKCHWLK) are cytoplasmic. The helical transmembrane segment at 281-301 (STMIFMFSVIAVTGVMLILHL) threads the bilayer. Topologically, residues 302–321 (KQRVPVSDQHFELDTLWLED) are extracellular. A helical transmembrane segment spans residues 322–342 (ISVILCVLIVFIIKLISFIYF). Residues 343–400 (RLEGDHQGWSLPPYLSATPTAAICRLAVPEYSRGHLQLDSEDDLAGMGPSPFFITPCF) are Cytoplasmic-facing.

Belongs to the SKINT family. Expressed in skin, thymus and mammary gland.

It localises to the membrane. In terms of biological role, may act by engaging a cell surface molecule on immature T-cells in the embryonic thymus. This chain is Selection and upkeep of intraepithelial T-cells protein 2 (Skint2), found in Mus musculus (Mouse).